A 121-amino-acid chain; its full sequence is uncharacterized protein (121 aa).

2 disordered regions span residues 38–76 (NQMAQKRNKQSKKPKQTSKGVKKSSKQNKNSSKNNKYQQ) and 91–121 (SVLRSAHNSGSKMSDISNSIQLLSMTKKQEN). Positions 43-63 (KRNKQSKKPKQTSKGVKKSSK) are enriched in basic residues. The segment covering 64-76 (QNKNSSKNNKYQQ) has biased composition (low complexity).

This is an uncharacterized protein from Schizosaccharomyces pombe (strain 972 / ATCC 24843) (Fission yeast).